The following is a 247-amino-acid chain: Pulmonary surfactant-associated protein A (247 aa).

The signal sequence occupies residues M1 to C19. A glycan (N-linked (GlcNAc...) asparagine) is linked at N20. The Collagen-like domain occupies G27–P99. 9 positions are modified to 4-hydroxyproline: P29, P32, P35, P41, P53, P56, P62, P66, and P69. The segment at P32–S101 is disordered. Residues P41 to K50 show a composition bias toward basic and acidic residues. Over residues P53 to V64 the composition is skewed to pro residues. Residues E83 to E92 are compositionally biased toward basic and acidic residues. One can recognise a C-type lectin domain in the interval L131–F247. 2 cysteine pairs are disulfide-bonded: C154–C245 and C223–C237. N206 is a glycosylation site (N-linked (GlcNAc...) asparagine). The Ca(2+) site is built by E214, R216, N233, and D234.

It belongs to the SFTPA family. As to quaternary structure, oligomeric complex of 6 set of homotrimers.

It localises to the secreted. Its subcellular location is the extracellular space. It is found in the extracellular matrix. The protein resides in the surface film. In presence of calcium ions, it binds to surfactant phospholipids and contributes to lower the surface tension at the air-liquid interface in the alveoli of the mammalian lung and is essential for normal respiration. Enhances the expression of MYO18A/SP-R210 on alveolar macrophages. The sequence is that of Pulmonary surfactant-associated protein A (SFTPA1) from Cavia porcellus (Guinea pig).